The following is a 243-amino-acid chain: tRNA1(Val) (adenine(37)-N6)-methyltransferase (243 aa).

This sequence belongs to the methyltransferase superfamily. tRNA (adenine-N(6)-)-methyltransferase family.

The protein localises to the cytoplasm. It carries out the reaction adenosine(37) in tRNA1(Val) + S-adenosyl-L-methionine = N(6)-methyladenosine(37) in tRNA1(Val) + S-adenosyl-L-homocysteine + H(+). In terms of biological role, specifically methylates the adenine in position 37 of tRNA(1)(Val) (anticodon cmo5UAC). This is tRNA1(Val) (adenine(37)-N6)-methyltransferase from Shewanella woodyi (strain ATCC 51908 / MS32).